The chain runs to 266 residues: MPLSFTQPCSSGALLLLVVSNLLLWENVACLPLSSNDTDDDPLSIKGLLDHAMILSKNITDLNMELRRIFTISEMSAKLIDKFLSSSSSSDSYDQFMLEFLGQQELLTKNLTYCHKYSIKVPEDIEEAQNVISLEDFPILILSRMQAWNETLKNRINLSEGTPGIDDDILPIYKNIETKIAELLEDSKSILSQAYGATENVADYTLWSGLEDLQSSDEETRFLALCKLSYCLHVDIHTANFYLQFLRCVALVNSDSCLSSKTGNDS.

Residues 1–30 form the signal peptide; sequence MPLSFTQPCSSGALLLLVVSNLLLWENVAC. Residues Asn-36, Asn-58, Asn-110, Asn-149, and Asn-157 are each glycosylated (N-linked (GlcNAc...) asparagine). 2 cysteine pairs are disulfide-bonded: Cys-114–Cys-231 and Cys-248–Cys-257.

This sequence belongs to the somatotropin/prolactin family. As to expression, expressed specifically in the placenta. Detected only in the trophoblast giant cells.

The protein resides in the secreted. The chain is Prolactin-7A1 (Prl7a1) from Mus musculus (Mouse).